The following is a 505-amino-acid chain: N-succinylglutamate 5-semialdehyde dehydrogenase (505 aa).

234 to 239 (GSAHTG) contacts NAD(+). Residues Glu257 and Cys291 contribute to the active site.

This sequence belongs to the aldehyde dehydrogenase family. AstD subfamily.

The catalysed reaction is N-succinyl-L-glutamate 5-semialdehyde + NAD(+) + H2O = N-succinyl-L-glutamate + NADH + 2 H(+). It functions in the pathway amino-acid degradation; L-arginine degradation via AST pathway; L-glutamate and succinate from L-arginine: step 4/5. Catalyzes the NAD-dependent reduction of succinylglutamate semialdehyde into succinylglutamate. This is N-succinylglutamate 5-semialdehyde dehydrogenase from Yersinia pestis (strain Pestoides F).